An 825-amino-acid chain; its full sequence is MDKQWFPAAGILLAALLVVSASTLTLLSTNEDPEQFPSAPGTSAQQSSRILLGILTDVTGGINSVEREPEALGRRAGGLSTEGAGGQESPSMPGPSGRVIPEPIPSALTTSASDMASQPVSSGADPIEEIMALGTLETITMSSPQPSPRHESEQKFDKVFRLCGTVPASETLEKNVASKPAWHLIKAPPPPIFSRSPHLLWCTPNSTVYIPVPAWRDGHSRPEASSSVPLAPSTSLGLPIFPWMPNILKATESLLPASPGRSGLDLTSQVGSRASENTVALDTGPVSRGTSVLLLPSATSPSQASSLHSPRPSSASPLSASPSPAALSFFPSPASILVLVSSVTTGASDSPKAPVSVIAPSTTDSFIKTSNLGPQIALQPSHPGLWLPTSPIHMPTLSLQHFSSPPSTAHSSGFTESSVHADPTLASTLPHPGQDMSLQDLSFSTGGRSHTTHSVTFRINSNRFTKAVWNLVPLERWLLNRLICYQLRFIYQEAFPNFRNVSTLLFRPGCPEVKASLIFGPPDPSSIEILWTLYRKVKSSRWSLGYLSLADHGLSSAGYSMTDLTQEIINISFTLMRPFLPQLLLPSSQSCILLEKQTIQLVTHEVSRFYKAELQSQPLLLFSNVKEWVSVYMEYKFKSPIPIRLQGLASHLAHHITDPTLQKSSIMANGEKADLVFYEMWLLILGHPFTKTLENKTSSECQELRGLLTRQLTSVLQPLKNFGQVVVEEFHQEPLTARVQTAFFGAVPAQAIIQDTVLQALGSLQETEGLQLEMLLPVLGTPSSRASRGPRGGAMLNLQRFTSLFVLVALCTAPPFINKQALYLS.

An N-terminal signal peptide occupies residues 1 to 21; it reads MDKQWFPAAGILLAALLVVSA. Disordered regions lie at residues 66–97 and 299–322; these read EREP…GPSG and TSPS…SASP. Low complexity predominate over residues 302–322; it reads SQASSLHSPRPSSASPLSASP.

Expression is restricted to circumvallate papillae.

This chain is Taste receptor cell protein 1 (Trcg1), found in Mus musculus (Mouse).